A 541-amino-acid chain; its full sequence is Membrane protein insertase YidC (541 aa).

A helical transmembrane segment spans residues 6–26 (SLLVLALIFISFLVYQQWQLD). Residues 34 to 56 (EQTTSITATSDVPASSPSNSQAI) are disordered. Helical transmembrane passes span 337–357 (FWLL…IICV), 416–436 (LGGC…YWTF), 454–474 (LSAQ…MFLL), and 495–515 (PLVF…YWLV).

It belongs to the OXA1/ALB3/YidC family. Type 1 subfamily. In terms of assembly, interacts with the Sec translocase complex via SecD. Specifically interacts with transmembrane segments of nascent integral membrane proteins during membrane integration.

The protein localises to the cell inner membrane. Functionally, required for the insertion and/or proper folding and/or complex formation of integral membrane proteins into the membrane. Involved in integration of membrane proteins that insert both dependently and independently of the Sec translocase complex, as well as at least some lipoproteins. Aids folding of multispanning membrane proteins. This Haemophilus influenzae (strain 86-028NP) protein is Membrane protein insertase YidC.